The sequence spans 396 residues: RNA polymerase principal sigma factor HrdA (396 aa).

The segment covering 1–20 has biased composition (basic residues); sequence MRGGQRRASRLRPPTYRRRP. Residues 1–96 form a disordered region; the sequence is MRGGQRRASR…PTRTESGGPS (96 aa). 2 stretches are compositionally biased toward low complexity: residues 33-42 and 56-75; these read QTQTLTQTDT and LLAMPAQPGAGAALPHPGAP. A Polymerase core binding motif is present at residues 187–200; sequence DLVQEGNLGLIRAV. Residues 357–376 constitute a DNA-binding region (H-T-H motif); the sequence is LEEIGRLFGVTRERIRQIES.

It belongs to the sigma-70 factor family. As to quaternary structure, interacts transiently with the RNA polymerase catalytic core. Interacts with RNA polymerase-binding protein RbpA.

Sigma factors are initiation factors that promote the attachment of RNA polymerase to specific initiation sites and are then released. This Streptomyces coelicolor (strain ATCC BAA-471 / A3(2) / M145) protein is RNA polymerase principal sigma factor HrdA (hrdA).